Here is a 736-residue protein sequence, read N- to C-terminus: Glycogen [starch] synthase, muscle (736 aa).

Serine 8 bears the Phosphoserine; by AMPK and PKA mark. Serine 11 is modified (phosphoserine). Lysine 39 provides a ligand contact to UDP. UDP-alpha-D-glucose is bound by residues histidine 205 and arginine 211. Residues histidine 291, glutamate 292, glutamine 294, histidine 297, and lysine 301 each contribute to the alpha-D-glucose 6-phosphate site. UDP is bound at residue arginine 331. Arginine 331 contributes to the UDP-alpha-D-glucose binding site. Phosphoserine is present on serine 412. An alpha-D-glucose 6-phosphate-binding site is contributed by histidine 501. Residues glutamate 510, tryptophan 512, and glycine 513 each contribute to the UDP-alpha-D-glucose site. Threonine 515 contacts UDP. Alpha-D-glucose 6-phosphate-binding residues include arginine 582 and arginine 586. The disordered stretch occupies residues 631-736; it reads TQGYRYPRPA…PASSLGEERN (106 aa). Position 641 is a phosphoserine; by DYRK2, GSK3-alpha, GSK3-beta and PASK (serine 641). 2 positions are modified to phosphoserine; by GSK3-alpha and GSK3-beta: serine 645 and serine 649. Serine 652 is subject to Phosphoserine. Serine 653 bears the Phosphoserine; by GSK3-alpha and GSK3-beta mark. Residue serine 657 is modified to Phosphoserine; by CK2. Over residues 658–681 the composition is skewed to acidic residues; it reads EDEEEPRDLPPDEDDERYDEDEEA. Residues 682-695 show a composition bias toward basic and acidic residues; the sequence is AKDRRNIRAPEWPR. Serine 698 is modified (phosphoserine). Threonine 700 is subject to Phosphothreonine. Serine 709 is subject to Phosphoserine. Residues 714–727 show a composition bias toward low complexity; sequence PSSSVSTPSEPLSP. Threonine 720 carries the phosphothreonine modification. 2 positions are modified to phosphoserine: serine 726 and serine 730.

This sequence belongs to the glycosyltransferase 3 family. Part of the GYS1-GYG1 complex, a heterooctamer composed of a tetramer of GYS1 and 2 dimers of GYG1, where each GYS1 protomer binds to one GYG1 subunit (via GYG1 C-terminus); the GYS1 tetramer may dissociate from GYG1 dimers to continue glycogen polymerization on its own. In terms of processing, phosphorylation at Ser-8 by AMPK inactivates the enzyme activity. Primed phosphorylation at Ser-657 (site 5) by CSNK2A1 and CSNK2A2 is required for inhibitory phosphorylation at Ser-641 (site 3a), Ser-645 (site 3b), Ser-649 (site 3c) and Ser-653 (site 4) by GSK3A an GSK3B. Phosphorylated at Ser-641 by PASK, leading to inactivation; phosphorylation by PASK is inhibited by glycogen. Phosphorylated at Ser-641 by DYRK2, leading to inactivation. Dephosphorylation at Ser-641 and Ser-645 by PP1 activates the enzyme.

It catalyses the reaction [(1-&gt;4)-alpha-D-glucosyl](n) + UDP-alpha-D-glucose = [(1-&gt;4)-alpha-D-glucosyl](n+1) + UDP + H(+). Its pathway is glycan biosynthesis; glycogen biosynthesis. With respect to regulation, allosteric activation by glucose-6-phosphate. Phosphorylation reduces the activity towards UDP-glucose. When in the non-phosphorylated state, glycogen synthase does not require glucose-6-phosphate as an allosteric activator; when phosphorylated it does. Glycogen synthase participates in the glycogen biosynthetic process along with glycogenin and glycogen branching enzyme. Extends the primer composed of a few glucose units formed by glycogenin by adding new glucose units to it. In this context, glycogen synthase transfers the glycosyl residue from UDP-Glc to the non-reducing end of alpha-1,4-glucan. The protein is Glycogen [starch] synthase, muscle (GYS1) of Bos taurus (Bovine).